The following is a 282-amino-acid chain: Nucleotide-binding protein in ptsN-ptsO intergenic region (282 aa).

8–15 (GRSGSGKS) contacts ATP. 56 to 59 (DVRN) contacts GTP.

It belongs to the RapZ-like family.

Its function is as follows. Displays ATPase and GTPase activities. This is Nucleotide-binding protein in ptsN-ptsO intergenic region from Shewanella violacea.